Here is a 316-residue protein sequence, read N- to C-terminus: Ribose-phosphate pyrophosphokinase (316 aa).

Residues 42 to 44 and 101 to 102 each bind ATP; these read DGE and RQ. Positions 135 and 174 each coordinate Mg(2+). Residue Lys-197 is part of the active site. D-ribose 5-phosphate-binding positions include Arg-199, Asp-223, and 227 to 231; that span reads DTAGT.

The protein belongs to the ribose-phosphate pyrophosphokinase family. Class I subfamily. In terms of assembly, homohexamer. Mg(2+) serves as cofactor.

The protein localises to the cytoplasm. The catalysed reaction is D-ribose 5-phosphate + ATP = 5-phospho-alpha-D-ribose 1-diphosphate + AMP + H(+). It participates in metabolic intermediate biosynthesis; 5-phospho-alpha-D-ribose 1-diphosphate biosynthesis; 5-phospho-alpha-D-ribose 1-diphosphate from D-ribose 5-phosphate (route I): step 1/1. Involved in the biosynthesis of the central metabolite phospho-alpha-D-ribosyl-1-pyrophosphate (PRPP) via the transfer of pyrophosphoryl group from ATP to 1-hydroxyl of ribose-5-phosphate (Rib-5-P). This chain is Ribose-phosphate pyrophosphokinase, found in Halalkalibacterium halodurans (strain ATCC BAA-125 / DSM 18197 / FERM 7344 / JCM 9153 / C-125) (Bacillus halodurans).